The sequence spans 489 residues: Metal cation symporter ZIP14 (489 aa).

An N-terminal signal peptide occupies residues 1-28; sequence MKRLHPALPSCLLLVLFGIWRTAPQTHA. The Extracellular portion of the chain corresponds to 29-155; that stretch reads SSAGLPPLSA…PSAIEVWGYG (127 aa). N-linked (GlcNAc...) asparagine glycans are attached at residues N52, N75, N85, and N100. Residues 156–176 form a helical membrane-spanning segment; sequence FLCVTVISLCSLMGASVVPFM. The Cytoplasmic segment spans residues 177–184; the sequence is KKTFYKRL. A helical transmembrane segment spans residues 185-205; it reads LLYFIALAIGTLYSNALFQLI. Over 206–221 the chain is Extracellular; the sequence is PEAFGFNPQDNYVSKS. A helical membrane pass occupies residues 222–242; that stretch reads AVVFGGFYLFFFTEKILKMLL. At 243–349 the chain is on the cytoplasmic side; that stretch reads KQKNEHHHGH…SDGLHNFIDG (107 aa). Residues 248–255 carry the HHHGHXHX-motif motif; it reads HHHGHNHF. A helical transmembrane segment spans residues 350-370; sequence LAIGASFTVSVFQGISTSVAI. The Extracellular portion of the chain corresponds to 371–394; the sequence is LCEEFPHELGDFVILLNAGMSIQQ. Residues 373–378 carry the XEXPHE-motif motif; sequence EEFPHE. The chain crosses the membrane as a helical span at residues 395 to 415; sequence ALFFNFLSACCCYLGLAFGIL. Residues 416 to 421 are Cytoplasmic-facing; it reads AGSHFS. The chain crosses the membrane as a helical span at residues 422–442; the sequence is ANWIFALAGGMFLYIALADMF. At 443-457 the chain is on the extracellular side; that stretch reads PEMNEVCQEDEKNDS. A helical transmembrane segment spans residues 458-478; that stretch reads FLVPFVIQNLGLLTGFSIMLV. Residues 479-489 lie on the Cytoplasmic side of the membrane; it reads LTMYSGQIQIG.

The protein belongs to the ZIP transporter (TC 2.A.5) family. As to quaternary structure, homotrimer. In terms of processing, ubiquitinated. Ubiquitination occurs upon iron depletion. The ubiquitinated form undergoes proteasomal degradation. N-glycosylated. N-glycosylation at Asn-100 is required for iron-regulated extraction of the transporter from membranes and subsequent proteasomal degradation. In terms of tissue distribution, widely expressed. Highly and transiently expressed during the early stage of adipocyte differentiation. Strongly expressed in liver, preadipocyte, duodenum and jejunum, moderately in brain, heart, skeletal muscle, spleen, pancreas, kidney and white adipose cells. Expression is almost undetectable in lung, testis and brown adipose cells. Expressed by chondrocytes and pituitary cells. More strongly expressed in brain. As to expression, more strongly expressed in liver, kidney and duodenum.

It localises to the cell membrane. The protein resides in the apical cell membrane. It is found in the basolateral cell membrane. Its subcellular location is the early endosome membrane. The protein localises to the late endosome membrane. It localises to the lysosome membrane. It carries out the reaction Zn(2+)(out) + 2 hydrogencarbonate(out) = Zn(2+)(in) + 2 hydrogencarbonate(in). The enzyme catalyses Mn(2+)(out) + 2 hydrogencarbonate(out) = Mn(2+)(in) + 2 hydrogencarbonate(in). The catalysed reaction is Fe(2+)(out) + 2 hydrogencarbonate(out) = Fe(2+)(in) + 2 hydrogencarbonate(in). It catalyses the reaction Cd(2+)(out) + 2 hydrogencarbonate(out) = Cd(2+)(in) + 2 hydrogencarbonate(in). With respect to regulation, inhibited by cyanide and therefore dependent of an energy source. Inhibited by DIDS/4,4'-diisothiocyanatostilbene-2,2'-disulfonic acid, an inhibitor hydrogencarbonate-dependent transporters. Electroneutral transporter of the plasma membrane mediating the cellular uptake of the divalent metal cations zinc, manganese and iron that are important for tissue homeostasis, metabolism, development and immunity. Functions as an energy-dependent symporter, transporting through the membranes an electroneutral complex composed of a divalent metal cation and two bicarbonate anions. Beside these endogenous cellular substrates, can also import cadmium a non-essential metal which is cytotoxic and carcinogenic. Controls the cellular uptake by the intestinal epithelium of systemic zinc, which is in turn required to maintain tight junctions and the intestinal permeability. Modifies the activity of zinc-dependent phosphodiesterases, thereby indirectly regulating G protein-coupled receptor signaling pathways important for gluconeogenesis and chondrocyte differentiation. Regulates insulin receptor signaling, glucose uptake, glycogen synthesis and gluconeogenesis in hepatocytes through the zinc-dependent intracellular catabolism of insulin. Through zinc cellular uptake also plays a role in the adaptation of cells to endoplasmic reticulum stress. Major manganese transporter of the basolateral membrane of intestinal epithelial cells, it plays a central role in manganese systemic homeostasis through intestinal manganese uptake. Also involved in manganese extracellular uptake by cells of the blood-brain barrier. May also play a role in manganese and zinc homeostasis participating in their elimination from the blood through the hepatobiliary excretion. Also functions in the extracellular uptake of free iron. May also function intracellularly and mediate the transport from endosomes to cytosol of iron endocytosed by transferrin. Plays a role in innate immunity by regulating the expression of cytokines by activated macrophages. This is Metal cation symporter ZIP14 from Mus musculus (Mouse).